Reading from the N-terminus, the 583-residue chain is Phosphoglucomutase, cytoplasmic 2 (583 aa).

The alpha-D-glucose 1,6-bisphosphate site is built by R25 and S124. Catalysis depends on S124, which acts as the Phosphoserine intermediate. 4 residues coordinate Mg(2+): S124, D300, D302, and D304. S124 bears the Phosphoserine mark. The alpha-D-glucose 1,6-bisphosphate site is built by D304, R305, T368, E387, S389, and K400.

It belongs to the phosphohexose mutase family. As to quaternary structure, monomer. Requires Mg(2+) as cofactor.

It is found in the cytoplasm. It catalyses the reaction alpha-D-glucose 1-phosphate = alpha-D-glucose 6-phosphate. It carries out the reaction O-phospho-L-seryl-[protein] + alpha-D-glucose 1-phosphate = alpha-D-glucose 1,6-bisphosphate + L-seryl-[protein]. The catalysed reaction is alpha-D-glucose 1,6-bisphosphate + L-seryl-[protein] = O-phospho-L-seryl-[protein] + alpha-D-glucose 6-phosphate. In terms of biological role, catalyzes the reversible isomerization of alpha-D-glucose 1-phosphate to alpha-D-glucose 6-phosphate. The mechanism proceeds via the intermediate compound alpha-D-glucose 1,6-bisphosphate. This enzyme participates in both the breakdown and synthesis of glucose. This Zea mays (Maize) protein is Phosphoglucomutase, cytoplasmic 2.